The chain runs to 185 residues: Elongation factor P (185 aa).

Belongs to the elongation factor P family.

The protein resides in the cytoplasm. It participates in protein biosynthesis; polypeptide chain elongation. Its function is as follows. Involved in peptide bond synthesis. Stimulates efficient translation and peptide-bond synthesis on native or reconstituted 70S ribosomes in vitro. Probably functions indirectly by altering the affinity of the ribosome for aminoacyl-tRNA, thus increasing their reactivity as acceptors for peptidyl transferase. The sequence is that of Elongation factor P from Clostridium tetani (strain Massachusetts / E88).